Here is a 117-residue protein sequence, read N- to C-terminus: Glycoprotein hormones alpha chain (117 aa).

An N-terminal signal peptide occupies residues 1-23 (MGSVKSAGLSLLLLSFLLYVADS). Disulfide bonds link Cys-34–Cys-57, Cys-37–Cys-86, Cys-54–Cys-107, Cys-58–Cys-109, and Cys-85–Cys-112. Residues Asn-78 and Asn-103 are each glycosylated (N-linked (GlcNAc...) asparagine).

The protein belongs to the glycoprotein hormones subunit alpha family. In terms of assembly, heterodimer. Glycoprotein hormones are heterodimers composed of a common alpha chain described here and a unique beta chain which confers their biological specificity to the different hormones.

It is found in the secreted. Functionally, shared alpha chain of heterodimeric glycoprotein hormones. These hormones bind specific receptors on target cells that in turn activate downstream signaling pathways. Involved in gametogenesis and steroidogenesis. In Acanthopagrus latus (Yellowfin seabream), this protein is Glycoprotein hormones alpha chain (cga).